Reading from the N-terminus, the 937-residue chain is Valine--tRNA ligase (937 aa).

The 'HIGH' region motif lies at 44–54 (PNVTGTLHMGH). A 'KMSKS' region motif is present at residues 548–552 (KMSKS). Residue Lys-551 coordinates ATP. A coiled-coil region spans residues 874–937 (AAETARLTKE…KLKAQLLKLA (64 aa)).

It belongs to the class-I aminoacyl-tRNA synthetase family. ValS type 1 subfamily. In terms of assembly, monomer.

The protein resides in the cytoplasm. It carries out the reaction tRNA(Val) + L-valine + ATP = L-valyl-tRNA(Val) + AMP + diphosphate. In terms of biological role, catalyzes the attachment of valine to tRNA(Val). As ValRS can inadvertently accommodate and process structurally similar amino acids such as threonine, to avoid such errors, it has a 'posttransfer' editing activity that hydrolyzes mischarged Thr-tRNA(Val) in a tRNA-dependent manner. The protein is Valine--tRNA ligase of Laribacter hongkongensis (strain HLHK9).